The primary structure comprises 387 residues: Growth-regulating factor 3 (387 aa).

The QLQ domain occupies 53-88 (PFTAAQYEELEQQALIYKYLVAGVPVPADLLLPIRR). 2 short sequence motifs (bipartite nuclear localization signal) span residues 111–129 (KKLDPEPGRCRRTDGKKWR) and 147–154 (RGRNRSRK). In terms of domain architecture, WRC spans 114–158 (DPEPGRCRRTDGKKWRCSKEAAPDSKYCERHMHRGRNRSRKPVEA). The segment at 145 to 176 (MHRGRNRSRKPVEAQLVAPHSQPPATAPAAAV) is disordered.

It belongs to the GRF family.

It is found in the nucleus. Functionally, transcription activator that plays a regulatory role in gibberellin-induced stem elongation. This is Growth-regulating factor 3 (GRF3) from Oryza sativa subsp. japonica (Rice).